The sequence spans 318 residues: ADP-ribosyl cyclase/cyclic ADP-ribose hydrolase 2 (318 aa).

Positions 1–32 are cleaved as a signal peptide; that stretch reads MAAQGCAASRLLQLLLQLLLLLLLLAAGGARA. Disulfide bonds link Cys-51-Cys-67, Cys-83-Cys-163, and Cys-144-Cys-157. Residues Asn-66 and Asn-95 are each glycosylated (N-linked (GlcNAc...) asparagine). NAD(+) is bound at residue Trp-109. Trp-109 is a binding site for nicotinamide. Residue Asn-148 is glycosylated (N-linked (GlcNAc...) asparagine). Trp-172 serves as a coordination point for NAD(+). Asn-192 carries N-linked (GlcNAc...) asparagine glycosylation. Residue Glu-210 participates in NAD(+) binding. 2 disulfide bridges follow: Cys-238-Cys-259 and Cys-271-Cys-280. A lipid anchor (GPI-anchor amidated alanine) is attached at Ala-293. A propeptide spans 294–318 (removed in mature form); sequence PSLYTEQRAGLIIPLFLVLASRTQL.

This sequence belongs to the ADP-ribosyl cyclase family. In terms of assembly, homodimer. As to expression, expressed in various tissues including placenta, lung, liver and kidney.

The protein resides in the cell membrane. It carries out the reaction NAD(+) + H2O = ADP-D-ribose + nicotinamide + H(+). The enzyme catalyses NAD(+) = cyclic ADP-beta-D-ribose + nicotinamide + H(+). The catalysed reaction is cyclic ADP-beta-D-ribose + H2O = ADP-D-ribose. With respect to regulation, ADP-ribosyl cyclase and cADPR hydrolase activities are both activated by Zn(2+) or Mn(2+), and inhibited by Cu(2+), while Mg(2+) and Ca(2+) do not have any significant influence. Its function is as follows. Catalyzes both the synthesis of cyclic ADP-beta-D-ribose (cADPR) from NAD(+), and its hydrolysis to ADP-D-ribose (ADPR). Cyclic ADPR is known to serve as an endogenous second messenger that elicits calcium release from intracellular stores, and thus regulates the mobilization of intracellular calcium. May be involved in pre-B-cell growth. The polypeptide is ADP-ribosyl cyclase/cyclic ADP-ribose hydrolase 2 (BST1) (Homo sapiens (Human)).